Consider the following 776-residue polypeptide: Isoamylase (776 aa).

Positions 1–26 are cleaved as a signal peptide; sequence MKCPKILAALLGCAVLAGVPAMPAHA. 5 residues coordinate Ca(2+): aspartate 154, glutamate 255, threonine 256, asparagine 258, and aspartate 285. The active-site Nucleophile is the aspartate 401. Cysteines 410 and 422 form a disulfide. The Proton donor role is filled by glutamate 461. 2 disulfide bridges follow: cysteine 546–cysteine 616 and cysteine 738–cysteine 766.

It belongs to the glycosyl hydrolase 13 family. In terms of assembly, monomer. Ca(2+) serves as cofactor.

It is found in the secreted. It catalyses the reaction Hydrolysis of (1-&gt;6)-alpha-D-glucosidic branch linkages in glycogen, amylopectin and their beta-limit dextrins.. The protein is Isoamylase (iam) of Pseudomonas amyloderamosa.